We begin with the raw amino-acid sequence, 346 residues long: Zinc transporter YKE4 (346 aa).

The Extracellular portion of the chain corresponds to 1 to 2; the sequence is MK. The chain crosses the membrane as a helical span at residues 3–23; that stretch reads ASHICSYLLSIAPLVVSHGVH. Residues 24 to 69 are Cytoplasmic-facing; sequence HNRDHGHEANHESKQSFLILKQESIFYSLVCFLQNHLFVLGPRYNA. The helical transmembrane segment at 70–90 threads the bilayer; it reads IVAILIIQLMPCLFVLFVPGL. The Extracellular segment spans residues 91-99; that stretch reads RKNDRASLT. A helical membrane pass occupies residues 100–120; that stretch reads LSLLVSFSLGTLLGDILLHVI. Residues 121–126 are Cytoplasmic-facing; it reads PESLSG. The helical transmembrane segment at 127 to 147 threads the bilayer; it reads VTDVTMVGGAIFLGFISFLTL. Topologically, residues 148–202 are extracellular; the sequence is DKTMRILSGTSNDDGSIHSHSHSHTPQQTAEKKAGFNMSAYLNVISGIAHHITDG. Asn-184 carries N-linked (GlcNAc...) asparagine glycosylation. The chain crosses the membrane as a helical span at residues 203–223; it reads IALATSFYSSTQVGIMTSIAV. Over 224-252 the chain is Cytoplasmic; sequence TFHEIPHELGDFAILLSSGFTFPQAIRAQ. Residues 253–273 form a helical membrane-spanning segment; that stretch reads AVTAFGAVVGTSIGCWMNEIG. 2 N-linked (GlcNAc...) asparagine glycosylation sites follow: Asn-274 and Asn-285. The Extracellular portion of the chain corresponds to 274 to 290; it reads NNSHKATSSSANASELM. A helical membrane pass occupies residues 291–311; sequence LPFTAGGLIYIATTSVVPQIL. Over 312–322 the chain is Cytoplasmic; that stretch reads HSSAPDSKLRE. The helical transmembrane segment at 323 to 343 threads the bilayer; sequence FKKWALQLVFIFVGFAVMALM. Over 344-346 the chain is Extracellular; the sequence is DEH.

Belongs to the ZIP transporter (TC 2.A.5) family. KE4/Catsup subfamily.

It is found in the endoplasmic reticulum membrane. In terms of biological role, zinc transporter whose role depends on the zinc status of the cells. It helps to balance zinc levels between the cytosol and the secretory pathway. It transports zinc into the secretory pathway in a zinc-adequate environment and in a high zinc medium. In high zinc medium, transport of zinc into the secretory pathway is a way to eliminate zinc from the cytosol. Under low cytosolic zinc conditions, it removes zinc from the secretory pathway and acts as a zinc importer that helps to alleviate ER stress. This is Zinc transporter YKE4 (YKE4) from Saccharomyces cerevisiae (strain ATCC 204508 / S288c) (Baker's yeast).